A 248-amino-acid chain; its full sequence is MVESSDENDQASSFASTEDLKELRFVFWFSVLIPIFFIALIIIKRYHSCTYQKNRLLRSIFCCMSIDDEEELETDMYDLPIVEPSITLPKYSASLQENERLVGIEGEREGIDVVLNFSKAGEGGVNPYPSFDTPNARILQLRQLAKLKKHGPRISYHGIGIGRCNGNRVLPPYPEPALLPEAPNTREASNNTYLYGFSNNFINISRTLNLRYPSASASISDSLPPPYQVLSVPSVTSTHAFSNNANQT.

The chain crosses the membrane as a helical span at residues 23-43 (LRFVFWFSVLIPIFFIALIII).

Its subcellular location is the membrane. In terms of biological role, has a role in meiosis. This chain is Meiotically up-regulated gene 110 protein (mug110), found in Schizosaccharomyces pombe (strain 972 / ATCC 24843) (Fission yeast).